A 217-amino-acid chain; its full sequence is MRTPHLPEAIATRKYFDREFDRQAIKLLPNEYYVTGEDVVLTTVLGSCVAACIRDEKAGVGGMNHFMLPDDEGGTADRMLSASMRYGCYALEVLINELLKMGARRERLEAKVFGGGAVLANMTTLNIGDRNADFVLRYLKTEEIRVAAQDLRGPHARRVSYFPVTGLALVRRLTRQDDQVSVERDERALARAIATSGTAPSRGGELFTRASASRTPS.

Positions 194–217 are disordered; that stretch reads ATSGTAPSRGGELFTRASASRTPS.

Belongs to the CheD family.

It carries out the reaction L-glutaminyl-[protein] + H2O = L-glutamyl-[protein] + NH4(+). Probably deamidates glutamine residues to glutamate on methyl-accepting chemotaxis receptors (MCPs), playing an important role in chemotaxis. The sequence is that of Probable chemoreceptor glutamine deamidase CheD from Cupriavidus pinatubonensis (strain JMP 134 / LMG 1197) (Cupriavidus necator (strain JMP 134)).